Here is a 228-residue protein sequence, read N- to C-terminus: Leucyl/phenylalanyl-tRNA--protein transferase (228 aa).

It belongs to the L/F-transferase family.

It localises to the cytoplasm. The enzyme catalyses N-terminal L-lysyl-[protein] + L-leucyl-tRNA(Leu) = N-terminal L-leucyl-L-lysyl-[protein] + tRNA(Leu) + H(+). It carries out the reaction N-terminal L-arginyl-[protein] + L-leucyl-tRNA(Leu) = N-terminal L-leucyl-L-arginyl-[protein] + tRNA(Leu) + H(+). It catalyses the reaction L-phenylalanyl-tRNA(Phe) + an N-terminal L-alpha-aminoacyl-[protein] = an N-terminal L-phenylalanyl-L-alpha-aminoacyl-[protein] + tRNA(Phe). In terms of biological role, functions in the N-end rule pathway of protein degradation where it conjugates Leu, Phe and, less efficiently, Met from aminoacyl-tRNAs to the N-termini of proteins containing an N-terminal arginine or lysine. This chain is Leucyl/phenylalanyl-tRNA--protein transferase, found in Sulfurimonas denitrificans (strain ATCC 33889 / DSM 1251) (Thiomicrospira denitrificans (strain ATCC 33889 / DSM 1251)).